The chain runs to 634 residues: MTNSNLRTENHFDYVKITLASPDRVMEWGQRTLPNGQVVGEVTKPETINYRTLKPEMDGLFCEKIFGPSKDWECHCGKYKRVRHRGIVCERCGVEVTESRVRRHRMGFIKLAAPVSHVWYLKGIPSYVAILLDMPLRDVEQIVYFNCYVVLDAGDHKDLKYKQLLTEDEWLEIEDEIYAEDSEIENEPVVGIGAEALKQLLEDLQLNAVAEQLREEIAGSKGQKRAKLIKRLRVIDNFIATNARPEWMVLDAIPVIPPDLRPMVQLDGGRFATSDLNDLYRRVINRNNRLARLQEILAPEIIVRNEKRMLQEAVDALIDNGRRGRTVVGANNRPLKSLSDIIEGKQGRFRQNLLGKRVDYSGRSVIVVGPKLKMHQCGLPKEMAIELFQPFVIHRLIRQNIVNNIKAAKKLIQRADDEVMQVLQEVIDGHPIMLNRAPTLHRLGIQAFEPKLVDGRAIQLHPLVCPAFNADFDGDQMAVHVPLAIEAQTEARMLMLASNNILSPATGDPIITPSQDMVLGSYYLTALQPQMHPIEFGDRSRTYSSLEDVIHAFEDNRITLHDWVWVRFNGEVEDEDEREEPITTETLSDGTRFEQWTYRRDRFDEDGALISRYILTTVGRVVMNHTIIDAVAAT.

Zn(2+)-binding residues include Cys-74, Cys-76, Cys-89, and Cys-92. 3 residues coordinate Mg(2+): Asp-471, Asp-473, and Asp-475.

It belongs to the RNA polymerase beta' chain family. RpoC1 subfamily. As to quaternary structure, in cyanobacteria the RNAP catalytic core is composed of 2 alpha, 1 beta, 1 beta', 1 gamma and 1 omega subunit. When a sigma factor is associated with the core the holoenzyme is formed, which can initiate transcription. Mg(2+) is required as a cofactor. Requires Zn(2+) as cofactor.

It carries out the reaction RNA(n) + a ribonucleoside 5'-triphosphate = RNA(n+1) + diphosphate. DNA-dependent RNA polymerase catalyzes the transcription of DNA into RNA using the four ribonucleoside triphosphates as substrates. This Synechococcus sp. (strain CC9311) protein is DNA-directed RNA polymerase subunit gamma.